A 255-amino-acid chain; its full sequence is Tumor necrosis factor receptor superfamily member 9 (255 aa).

The first 23 residues, 1 to 23 (MGNSCYNIVATLLLVLNFERTRS), serve as a signal peptide directing secretion. TNFR-Cys repeat units lie at residues 24–45 (LQDP…NQIC), 47–86 (PCPP…NAEC), 87–118 (DCTP…KGCK), and 119–159 (DCCF…VVCG). The Extracellular portion of the chain corresponds to 24–186 (LQDPCSNCPA…PAREPGHSPQ (163 aa)). Intrachain disulfides connect C28–C37, C31–C45, C48–C62, C65–C78, C68–C86, C88–C94, C99–C106, C102–C117, and C121–C133. 2 N-linked (GlcNAc...) asparagine glycosylation sites follow: N138 and N149. Cysteines 139 and 158 form a disulfide. The segment at 161-180 (SPADLSPGASSVTPPAPARE) is disordered. The chain crosses the membrane as a helical span at residues 187–213 (IISFFLALTSTALLFLLFFLTLRFSVV). Residues 214 to 255 (KRGRKKLLYIFKQPFMRPVQTTQEEDGCSCRFPEEEEGGCEL) are Cytoplasmic-facing. The tract at residues 214 to 255 (KRGRKKLLYIFKQPFMRPVQTTQEEDGCSCRFPEEEEGGCEL) is interaction with LRR-1.

Predominantly homodimeric, but may also exist as a monomer. Interacts with TRAF1, TRAF2 and TRAF3. Interacts with LRR-repeat protein 1/LRR-1. In terms of tissue distribution, expressed on the surface of activated T-cells.

It localises to the cell membrane. Receptor for TNFSF9/4-1BBL. Conveys a signal that enhances CD8(+) T-cell survival, cytotoxicity, and mitochondrial activity, thereby promoting immunity against viruses and tumors. The sequence is that of Tumor necrosis factor receptor superfamily member 9 (TNFRSF9) from Homo sapiens (Human).